Here is a 227-residue protein sequence, read N- to C-terminus: Thiamine-phosphate synthase (227 aa).

4-amino-2-methyl-5-(diphosphooxymethyl)pyrimidine contacts are provided by residues 50 to 54 (QFRQK) and aspartate 82. Mg(2+) is bound by residues aspartate 83 and aspartate 102. Threonine 121 lines the 4-amino-2-methyl-5-(diphosphooxymethyl)pyrimidine pocket. 147 to 149 (TTS) is a 2-[(2R,5Z)-2-carboxy-4-methylthiazol-5(2H)-ylidene]ethyl phosphate binding site. Lysine 150 provides a ligand contact to 4-amino-2-methyl-5-(diphosphooxymethyl)pyrimidine. 2-[(2R,5Z)-2-carboxy-4-methylthiazol-5(2H)-ylidene]ethyl phosphate contacts are provided by residues glycine 178 and 198–199 (LS).

This sequence belongs to the thiamine-phosphate synthase family. The cofactor is Mg(2+).

It catalyses the reaction 2-[(2R,5Z)-2-carboxy-4-methylthiazol-5(2H)-ylidene]ethyl phosphate + 4-amino-2-methyl-5-(diphosphooxymethyl)pyrimidine + 2 H(+) = thiamine phosphate + CO2 + diphosphate. The catalysed reaction is 2-(2-carboxy-4-methylthiazol-5-yl)ethyl phosphate + 4-amino-2-methyl-5-(diphosphooxymethyl)pyrimidine + 2 H(+) = thiamine phosphate + CO2 + diphosphate. The enzyme catalyses 4-methyl-5-(2-phosphooxyethyl)-thiazole + 4-amino-2-methyl-5-(diphosphooxymethyl)pyrimidine + H(+) = thiamine phosphate + diphosphate. The protein operates within cofactor biosynthesis; thiamine diphosphate biosynthesis; thiamine phosphate from 4-amino-2-methyl-5-diphosphomethylpyrimidine and 4-methyl-5-(2-phosphoethyl)-thiazole: step 1/1. Functionally, condenses 4-methyl-5-(beta-hydroxyethyl)thiazole monophosphate (THZ-P) and 2-methyl-4-amino-5-hydroxymethyl pyrimidine pyrophosphate (HMP-PP) to form thiamine monophosphate (TMP). The protein is Thiamine-phosphate synthase of Salinibacter ruber (strain DSM 13855 / M31).